The sequence spans 226 residues: Leucyl/phenylalanyl-tRNA--protein transferase (226 aa).

Belongs to the L/F-transferase family.

The protein resides in the cytoplasm. It catalyses the reaction N-terminal L-lysyl-[protein] + L-leucyl-tRNA(Leu) = N-terminal L-leucyl-L-lysyl-[protein] + tRNA(Leu) + H(+). The enzyme catalyses N-terminal L-arginyl-[protein] + L-leucyl-tRNA(Leu) = N-terminal L-leucyl-L-arginyl-[protein] + tRNA(Leu) + H(+). It carries out the reaction L-phenylalanyl-tRNA(Phe) + an N-terminal L-alpha-aminoacyl-[protein] = an N-terminal L-phenylalanyl-L-alpha-aminoacyl-[protein] + tRNA(Phe). In terms of biological role, functions in the N-end rule pathway of protein degradation where it conjugates Leu, Phe and, less efficiently, Met from aminoacyl-tRNAs to the N-termini of proteins containing an N-terminal arginine or lysine. The chain is Leucyl/phenylalanyl-tRNA--protein transferase from Stutzerimonas stutzeri (strain A1501) (Pseudomonas stutzeri).